Consider the following 305-residue polypeptide: P2Y purinoceptor 14 (305 aa).

Residues 1-29 (MDNTTTTEPPKQPCTRNTLITQQIIPMLY) are Extracellular-facing. The N-linked (GlcNAc...) asparagine glycan is linked to asparagine 3. Residues 30–50 (CVVFITGVLLNGISGWIFFYV) form a helical membrane-spanning segment. At 51–55 (PSSKS) the chain is on the cytoplasmic side. The helical transmembrane segment at 56 to 76 (FIIYLKNIVVADFLMGLTFPF) threads the bilayer. The Extracellular segment spans residues 77–96 (KVLSDSGLGPWQLNVFVFRV). A helical membrane pass occupies residues 97-117 (SAVIFYVNMYVSIAFFGLISF). Over 118-139 (DRYYKIVKPLLVSIVQSVNYSK) the chain is Cytoplasmic. The chain crosses the membrane as a helical span at residues 140 to 160 (VLSVLVWVLMLLLAVPNIILT). An N-linked (GlcNAc...) asparagine glycan is attached at asparagine 161. Residues 161-188 (NQSVKDVTNIQCMELKNELGRKWHKASN) are Extracellular-facing. The helical transmembrane segment at 189–209 (YVFVSIFWIVFLLLTVFYMAI) threads the bilayer. Residues 210–234 (TRKIFKSHLKSRKNSISVKRKSSRN) lie on the Cytoplasmic side of the membrane. Residues 235 to 255 (IFSIVLAFVACFAPYHVARIP) traverse the membrane as a helical segment. Residues 256–278 (YTKSQTEGHYSCQAKETLLYTKE) lie on the Extracellular side of the membrane. The chain crosses the membrane as a helical span at residues 279 to 299 (FTLLLSAANVCLDPISISSYA). Residues 300–305 (SRLEKS) are Cytoplasmic-facing.

The protein belongs to the G-protein coupled receptor 1 family.

Its subcellular location is the cell membrane. Receptor for UDP-glucose coupled to G-proteins. This is P2Y purinoceptor 14 (P2ry14) from Rattus norvegicus (Rat).